We begin with the raw amino-acid sequence, 472 residues long: Pentatricopeptide repeat-containing protein At5g46100 (472 aa).

PPR repeat units lie at residues 50 to 84 (DQSS…NCVV), 85 to 119 (SEDI…DCDP), 120 to 154 (SQKA…GLPP), 155 to 190 (TVAS…GCDP), 191 to 225 (DSYT…DCAP), 226 to 260 (TVVT…GIEP), 261 to 295 (NVFT…GCRP), 296 to 330 (NMVT…GLKP), 331 to 365 (DAGL…GITP), 373 to 406 (HVKT…GISV), and 407 to 441 (EVET…GCIP).

This sequence belongs to the PPR family. P subfamily.

The chain is Pentatricopeptide repeat-containing protein At5g46100 from Arabidopsis thaliana (Mouse-ear cress).